A 386-amino-acid chain; its full sequence is V-type proton ATPase subunit B 2 (386 aa).

It belongs to the ATPase alpha/beta chains family. As to quaternary structure, V-ATPase is a heteromultimeric enzyme composed of a peripheral catalytic V1 complex (main components: subunits A, B, C, D, E, and F) attached to an integral membrane V0 proton pore complex (main component: the proteolipid protein).

Its function is as follows. Non-catalytic subunit of the peripheral V1 complex of vacuolar ATPase. V-ATPase is responsible for acidifying a variety of intracellular compartments in eukaryotic cells. The chain is V-type proton ATPase subunit B 2 from Gossypium hirsutum (Upland cotton).